Reading from the N-terminus, the 299-residue chain is Tetrahydromethanopterin S-methyltransferase subunit E (299 aa).

The next 6 helical transmembrane spans lie at 57-77 (AISG…TIAW), 80-100 (INAG…AAIV), 133-153 (IGPI…AAYL), 158-178 (LGNP…VGAI), 226-246 (YFCS…IIFL), and 262-282 (VTKT…AAVI).

It belongs to the MtrE family. The complex is composed of 8 subunits; MtrA, MtrB, MtrC, MtrD, MtrE, MtrF, MtrG and MtrH.

It is found in the cell membrane. The enzyme catalyses 5-methyl-5,6,7,8-tetrahydromethanopterin + coenzyme M + 2 Na(+)(in) = 5,6,7,8-tetrahydromethanopterin + methyl-coenzyme M + 2 Na(+)(out). The protein operates within one-carbon metabolism; methanogenesis from CO(2); methyl-coenzyme M from 5,10-methylene-5,6,7,8-tetrahydromethanopterin: step 2/2. Its function is as follows. Part of a complex that catalyzes the formation of methyl-coenzyme M and tetrahydromethanopterin from coenzyme M and methyl-tetrahydromethanopterin. This is an energy-conserving, sodium-ion translocating step. In Methanococcus maripaludis (strain C7 / ATCC BAA-1331), this protein is Tetrahydromethanopterin S-methyltransferase subunit E.